We begin with the raw amino-acid sequence, 499 residues long: Probable cytosol aminopeptidase (499 aa).

Mn(2+)-binding residues include Lys-263 and Asp-268. Lys-275 is an active-site residue. Mn(2+) contacts are provided by Asp-286, Asp-345, and Glu-347. Residue Arg-349 is part of the active site.

The protein belongs to the peptidase M17 family. Requires Mn(2+) as cofactor.

The protein localises to the cytoplasm. The catalysed reaction is Release of an N-terminal amino acid, Xaa-|-Yaa-, in which Xaa is preferably Leu, but may be other amino acids including Pro although not Arg or Lys, and Yaa may be Pro. Amino acid amides and methyl esters are also readily hydrolyzed, but rates on arylamides are exceedingly low.. The enzyme catalyses Release of an N-terminal amino acid, preferentially leucine, but not glutamic or aspartic acids.. Presumably involved in the processing and regular turnover of intracellular proteins. Catalyzes the removal of unsubstituted N-terminal amino acids from various peptides. The sequence is that of Probable cytosol aminopeptidase from Chlamydia trachomatis serovar A (strain ATCC VR-571B / DSM 19440 / HAR-13).